The following is a 567-amino-acid chain: Dihydroxy-acid dehydratase 1 (567 aa).

Position 57 (Cys57) interacts with [2Fe-2S] cluster. Asp89 contacts Mg(2+). Cys130 is a [2Fe-2S] cluster binding site. Residues Asp131 and Lys132 each coordinate Mg(2+). Position 132 is an N6-carboxylysine (Lys132). A [2Fe-2S] cluster-binding site is contributed by Cys202. Residue Glu454 coordinates Mg(2+). Ser480 serves as the catalytic Proton acceptor.

Belongs to the IlvD/Edd family. As to quaternary structure, homodimer. [2Fe-2S] cluster serves as cofactor. Mg(2+) is required as a cofactor.

The enzyme catalyses (2R)-2,3-dihydroxy-3-methylbutanoate = 3-methyl-2-oxobutanoate + H2O. It catalyses the reaction (2R,3R)-2,3-dihydroxy-3-methylpentanoate = (S)-3-methyl-2-oxopentanoate + H2O. The protein operates within amino-acid biosynthesis; L-isoleucine biosynthesis; L-isoleucine from 2-oxobutanoate: step 3/4. It functions in the pathway amino-acid biosynthesis; L-valine biosynthesis; L-valine from pyruvate: step 3/4. Functionally, functions in the biosynthesis of branched-chain amino acids. Catalyzes the dehydration of (2R,3R)-2,3-dihydroxy-3-methylpentanoate (2,3-dihydroxy-3-methylvalerate) into 2-oxo-3-methylpentanoate (2-oxo-3-methylvalerate) and of (2R)-2,3-dihydroxy-3-methylbutanoate (2,3-dihydroxyisovalerate) into 2-oxo-3-methylbutanoate (2-oxoisovalerate), the penultimate precursor to L-isoleucine and L-valine, respectively. In Aromatoleum aromaticum (strain DSM 19018 / LMG 30748 / EbN1) (Azoarcus sp. (strain EbN1)), this protein is Dihydroxy-acid dehydratase 1.